Reading from the N-terminus, the 63-residue chain is Sec-independent protein translocase protein TatA (63 aa).

The chain crosses the membrane as a helical span at residues 1-21 (MGSLSMWHWLIVLVIVLLLFG). Residues 43–63 (MTDEDAPETAKTVDHKADETK) form a disordered region. Basic and acidic residues predominate over residues 53-63 (KTVDHKADETK).

The protein belongs to the TatA/E family. As to quaternary structure, the Tat system comprises two distinct complexes: a TatABC complex, containing multiple copies of TatA, TatB and TatC subunits, and a separate TatA complex, containing only TatA subunits. Substrates initially bind to the TatABC complex, which probably triggers association of the separate TatA complex to form the active translocon.

It is found in the cell inner membrane. Functionally, part of the twin-arginine translocation (Tat) system that transports large folded proteins containing a characteristic twin-arginine motif in their signal peptide across membranes. TatA could form the protein-conducting channel of the Tat system. This Rhizobium etli (strain ATCC 51251 / DSM 11541 / JCM 21823 / NBRC 15573 / CFN 42) protein is Sec-independent protein translocase protein TatA.